Consider the following 440-residue polypeptide: Beta-1,3-galactosyl-O-glycosyl-glycoprotein beta-1,6-N-acetylglucosaminyltransferase 3 (440 aa).

The Cytoplasmic portion of the chain corresponds to 1–12; it reads MKMTGWKKKLCR. The chain crosses the membrane as a helical; Signal-anchor for type II membrane protein span at residues 13–30; the sequence is GHHLWALGCYMLLAVVAL. The Lumenal segment spans residues 31 to 440; the sequence is RLSLRLKCDV…RHKAIYGTEL (410 aa). 4 cysteine pairs are disulfide-bonded: Cys-73–Cys-230, Cys-164–Cys-384, Cys-185–Cys-212, and Cys-393–Cys-425. N-linked (GlcNAc...) asparagine glycosylation is present at Asn-108.

Belongs to the glycosyltransferase 14 family. In terms of processing, N-glycosylated.

It is found in the golgi apparatus membrane. The catalysed reaction is a 3-O-[beta-D-galactosyl-(1-&gt;3)-N-acetyl-alpha-D-galactosaminyl]-L-seryl-[protein] + UDP-N-acetyl-alpha-D-glucosamine = 3-O-{beta-D-galactosyl-(1-&gt;3)-[N-acetyl-beta-D-glucosaminyl-(1-&gt;6)]-N-acetyl-alpha-D-galactosaminyl}-L-seryl-[protein] + UDP + H(+). The enzyme catalyses a 3-O-[beta-D-galactosyl-(1-&gt;3)-N-acetyl-alpha-D-galactosaminyl]-L-threonyl-[protein] + UDP-N-acetyl-alpha-D-glucosamine = a 3-O-{beta-D-galactosyl-(1-&gt;3)-[N-acetyl-beta-D-glucosaminyl-(1-&gt;6)]-N-acetyl-alpha-D-galactosaminyl}-L-threonyl-[protein] + UDP + H(+). It catalyses the reaction a beta-D-Gal-(1-&gt;4)-beta-D-GlcNAc-(1-&gt;3)-beta-D-Gal-(1-&gt;4)-beta-D-GlcNAc derivative + UDP-N-acetyl-alpha-D-glucosamine = a beta-D-Gal-(1-&gt;4)-beta-D-GlcNAc-(1-&gt;3)-[beta-D-GlcNAc-(1-&gt;6)]-beta-D-Gal-(1-&gt;4)-N-acetyl-beta-D-glucosaminyl derivative + UDP + H(+). It carries out the reaction 3-O-[N-acetyl-beta-D-glucosaminyl-(1-&gt;3)-N-acetyl-alpha-D-galactosaminyl]-L-seryl-[protein] + UDP-N-acetyl-alpha-D-glucosamine = 3-O-[N-acetyl-beta-D-glucosaminyl-(1-&gt;3)-[N-acetyl-beta-D-glucosaminyl-(1-&gt;6)]-N-acetyl-alpha-D-galactosaminyl]-L-seryl-[protein] + UDP + H(+). The catalysed reaction is a 3-O-[N-acetyl-beta-D-glucosaminyl-(1-&gt;3)-N-acetyl-alpha-D-galactosaminyl]-L-threonyl-[protein] + UDP-N-acetyl-alpha-D-glucosamine = 3-O-[N-acetyl-beta-D-glucosaminyl-(1-&gt;3)-[N-acetyl-beta-D-glucosaminyl-(1-&gt;6)]-N-acetyl-alpha-D-galactosaminyl]-L-threonyl-[protein] + UDP + H(+). The protein operates within protein modification; protein glycosylation. In terms of biological role, glycosyltransferase that can synthesize all known mucin beta 6 N-acetylglucosaminides. Mediates core 2 and core 4 O-glycan branching, 2 important steps in mucin-type biosynthesis. Also has I-branching enzyme activity by converting linear into branched poly-N-acetyllactosaminoglycans, leading to introduce the blood group I antigen during embryonic development. This chain is Beta-1,3-galactosyl-O-glycosyl-glycoprotein beta-1,6-N-acetylglucosaminyltransferase 3 (GCNT3), found in Ovis aries (Sheep).